Consider the following 580-residue polypeptide: Myb-like protein C (580 aa).

Disordered regions lie at residues 1-58, 73-101, 121-203, and 354-380; these read MTMI…YGSN, QYSI…TLLS, NVYN…SSTN, and SDND…NPPN. Composition is skewed to low complexity over residues 20-47, 87-101, and 126-203; these read NNNN…NNNN, NSTM…TLLS, and PHQS…SSTN. Residues 361–371 show a composition bias toward basic residues; the sequence is KKKRERIRKSV. 2 consecutive HTH myb-type domains span residues 368–430 and 431–482; these read RKSV…CPAI and RKGS…SREV. 2 DNA-binding regions (H-T-H motif) span residues 402 to 426 and 454 to 478; these read WKKI…KRVL and WKNV…KSCM. A Myb-like domain is found at 484–546; sequence WSSREDEILQ…ECKTRYFQLN (63 aa).

It is found in the nucleus. In terms of biological role, transcription activator required for the culmination, at the time of the fruiting body formation. Regulates genes involved in the cell differentiation within the fruiting body. The chain is Myb-like protein C (mybC) from Dictyostelium discoideum (Social amoeba).